Here is an 806-residue protein sequence, read N- to C-terminus: Lon protease (806 aa).

The Lon N-terminal domain occupies 13–206 (LPMMPIRDVV…RVAEMLDIEI (194 aa)). 356–363 (GPPGVGKT) provides a ligand contact to ATP. Residues 599–780 (KNEIGAATGL…DEVLKIALER (182 aa)) enclose the Lon proteolytic domain. Catalysis depends on residues Ser686 and Lys729.

It belongs to the peptidase S16 family. As to quaternary structure, homohexamer. Organized in a ring with a central cavity.

It localises to the cytoplasm. The catalysed reaction is Hydrolysis of proteins in presence of ATP.. In terms of biological role, ATP-dependent serine protease that mediates the selective degradation of mutant and abnormal proteins as well as certain short-lived regulatory proteins. Required for cellular homeostasis and for survival from DNA damage and developmental changes induced by stress. Degrades polypeptides processively to yield small peptide fragments that are 5 to 10 amino acids long. Binds to DNA in a double-stranded, site-specific manner. This chain is Lon protease, found in Solibacter usitatus (strain Ellin6076).